We begin with the raw amino-acid sequence, 215 residues long: Protein NETWORKED 3B (215 aa).

In terms of domain architecture, NAB spans 5–90 (SKWWWIGANH…QKHDLLIKTS (86 aa)). Residues 134-165 (DETMKEELEILREENRVYKEKKEVVTRLLANL) adopt a coiled-coil conformation.

The protein belongs to the NET family. In terms of assembly, interacts with F-actin.

Its function is as follows. Plant-specific actin binding protein. May be part of a membrane-cytoskeletal adapter complex. In Arabidopsis thaliana (Mouse-ear cress), this protein is Protein NETWORKED 3B.